The primary structure comprises 352 residues: Putative [LysW]-L-2-aminoadipate/[LysW]-L-glutamate phosphate reductase (352 aa).

NADP(+) contacts are provided by residues 10-13 and 34-36; these read SGFT and SRR. Cys151 is an active-site residue. NADP(+) is bound at residue Asn319.

Belongs to the NAGSA dehydrogenase family. Type 1 subfamily. LysY sub-subfamily.

The protein resides in the cytoplasm. The enzyme catalyses [amino-group carrier protein]-C-terminal-N-(1-carboxy-5-oxopentan-1-yl)-L-glutamine + phosphate + NADP(+) = [amino-group carrier protein]-C-terminal-N-(1-carboxy-5-phosphooxy-5-oxopentan-1-yl)-L-glutamine + NADPH + H(+). The catalysed reaction is [amino-group carrier protein]-C-terminal-gamma-(L-glutamyl-5-semialdehyde)-L-glutamate + phosphate + NADP(+) = [amino-group carrier protein]-C-terminal-gamma-(5-phospho-L-glutamyl)-L-glutamate + NADPH + H(+). Its pathway is amino-acid biosynthesis; L-lysine biosynthesis via AAA pathway; L-lysine from L-alpha-aminoadipate (Thermus route): step 3/5. It participates in amino-acid biosynthesis; L-arginine biosynthesis. Its function is as follows. Involved in both the arginine and lysine biosynthetic pathways. This Pyrobaculum islandicum (strain DSM 4184 / JCM 9189 / GEO3) protein is Putative [LysW]-L-2-aminoadipate/[LysW]-L-glutamate phosphate reductase.